Here is a 1794-residue protein sequence, read N- to C-terminus: Protein TIC 214 (1794 aa).

6 helical membrane-spanning segments follow: residues 23–43 (VVVGLYYGFITTFSIGPSYLF), 64–84 (FIMGQFMMLISIYYTPLHLAL), 87–107 (PHTITVLVLPYLLFHFFWNNH), 124–144 (LSIQCVFLNNLIFQLFNHFIL), 172–192 (VGWLIGHILFMKWVGLVLFWI), and 218–238 (ILSILLFITCVYYLGRIPSPI). Positions 244–307 (KETSETGETE…REGVNGKEKT (64 aa)) are disordered. Positions 248–258 (ETGETEEETDV) are enriched in acidic residues. 2 stretches are compositionally biased toward basic and acidic residues: residues 259–276 (EIERTSETKGTEQEKEGS) and 286–307 (SEEKGDPDKIDEREGVNGKEKT).

It belongs to the TIC214 family. As to quaternary structure, part of the Tic complex.

It is found in the plastid. The protein localises to the chloroplast inner membrane. In terms of biological role, involved in protein precursor import into chloroplasts. May be part of an intermediate translocation complex acting as a protein-conducting channel at the inner envelope. This chain is Protein TIC 214, found in Amborella trichopoda.